We begin with the raw amino-acid sequence, 323 residues long: MKHPSVRVCCFAFASCLLCAGCSLKRLAFSSLSHTLAPFPEGELDAHLSDADFTRVFTEEDDLDLVAQSLPLVLKVYEALHLQNPAHRGLSLAVGRLYIMYANAFVQTPAQYLPEDEFEAQNEAYSRARKLYLRGARYALSSLETAYPGFTREVFSGDEQRLHKVLSRCTRVDVGTLYWVGTGYVAAFALTPLGSALPDTVHAAVMMLERACDLWPSYQEGAVWNVLTKFYAAAPESFGGGMEKAHTAFEHLTRYCSAHDPDHHITYADALCIPLNNRAGFDEALDRALAIDPESVPHNKLLVILSQKRARWLKAHVQDFFLD.

This is an uncharacterized protein from Treponema pallidum (strain Nichols).